We begin with the raw amino-acid sequence, 123 residues long: Large ribosomal subunit protein bL12 (123 aa).

Belongs to the bacterial ribosomal protein bL12 family. As to quaternary structure, homodimer. Part of the ribosomal stalk of the 50S ribosomal subunit. Forms a multimeric L10(L12)X complex, where L10 forms an elongated spine to which 2 to 4 L12 dimers bind in a sequential fashion. Binds GTP-bound translation factors.

Functionally, forms part of the ribosomal stalk which helps the ribosome interact with GTP-bound translation factors. Is thus essential for accurate translation. The protein is Large ribosomal subunit protein bL12 of Rhodopseudomonas palustris (strain BisB18).